The following is a 622-amino-acid chain: UvrABC system protein C (622 aa).

The GIY-YIG domain maps to 13–92; it reads DKPGVYLMKN…IKKYRPRYNI (80 aa). Residues 204 to 239 form the UVR domain; it reads KDIIRKLKEDMDTLSENMEFEKAAELRDKIFALEKI.

This sequence belongs to the UvrC family. Interacts with UvrB in an incision complex.

The protein localises to the cytoplasm. The UvrABC repair system catalyzes the recognition and processing of DNA lesions. UvrC both incises the 5' and 3' sides of the lesion. The N-terminal half is responsible for the 3' incision and the C-terminal half is responsible for the 5' incision. In Clostridium kluyveri (strain ATCC 8527 / DSM 555 / NBRC 12016 / NCIMB 10680 / K1), this protein is UvrABC system protein C.